The sequence spans 556 residues: Arginine--tRNA ligase (556 aa).

The 'HIGH' region motif lies at 132 to 142; that stretch reads ANPTGDLHLGH.

The protein belongs to the class-I aminoacyl-tRNA synthetase family. Monomer.

The protein resides in the cytoplasm. It carries out the reaction tRNA(Arg) + L-arginine + ATP = L-arginyl-tRNA(Arg) + AMP + diphosphate. The sequence is that of Arginine--tRNA ligase from Listeria monocytogenes serotype 4b (strain F2365).